A 193-amino-acid polypeptide reads, in one-letter code: Lipid A acyltransferase PagP (193 aa).

Positions 1–32 (MNGMAVVMIIRKYFLIIALLVMPWLAIPSVSA) are cleaved as a signal peptide. Active-site residues include His-65, Asp-108, and Ser-109.

It belongs to the lipid A palmitoyltransferase family. Homodimer.

Its subcellular location is the cell outer membrane. The catalysed reaction is a lipid A + a 1,2-diacyl-sn-glycero-3-phosphocholine = a hepta-acyl lipid A + a 2-acyl-sn-glycero-3-phosphocholine. The enzyme catalyses a lipid IVA + a 1,2-diacyl-sn-glycero-3-phosphocholine = a lipid IVB + a 2-acyl-sn-glycero-3-phosphocholine. It carries out the reaction a lipid IIA + a 1,2-diacyl-sn-glycero-3-phosphocholine = a lipid IIB + a 2-acyl-sn-glycero-3-phosphocholine. Functionally, transfers a fatty acid residue from the sn-1 position of a phospholipid to the N-linked hydroxyfatty acid chain on the proximal unit of lipid A or its precursors. The chain is Lipid A acyltransferase PagP from Salmonella paratyphi C (strain RKS4594).